Consider the following 497-residue polypeptide: Acetyl-coenzyme A carboxylase carboxyl transferase subunit beta, chloroplastic (497 aa).

One can recognise a CoA carboxyltransferase N-terminal domain in the interval 230 to 497 (LWIQCENCYG…FFPLNQNSIK (268 aa)). Residues C234, C237, C253, and C256 each contribute to the Zn(2+) site. The segment at 234–256 (CENCYGLNYKKFFRSKMNICEQC) adopts a C4-type zinc-finger fold.

Belongs to the AccD/PCCB family. As to quaternary structure, acetyl-CoA carboxylase is a heterohexamer composed of biotin carboxyl carrier protein, biotin carboxylase and 2 subunits each of ACCase subunit alpha and ACCase plastid-coded subunit beta (accD). Zn(2+) serves as cofactor.

It localises to the plastid. The protein localises to the chloroplast stroma. The catalysed reaction is N(6)-carboxybiotinyl-L-lysyl-[protein] + acetyl-CoA = N(6)-biotinyl-L-lysyl-[protein] + malonyl-CoA. The protein operates within lipid metabolism; malonyl-CoA biosynthesis; malonyl-CoA from acetyl-CoA: step 1/1. Component of the acetyl coenzyme A carboxylase (ACC) complex. Biotin carboxylase (BC) catalyzes the carboxylation of biotin on its carrier protein (BCCP) and then the CO(2) group is transferred by the transcarboxylase to acetyl-CoA to form malonyl-CoA. This is Acetyl-coenzyme A carboxylase carboxyl transferase subunit beta, chloroplastic from Platanus occidentalis (Sycamore).